A 330-amino-acid chain; its full sequence is Probable allantoicase (330 aa).

It belongs to the allantoicase family.

It catalyses the reaction allantoate + H2O = (S)-ureidoglycolate + urea. It functions in the pathway nitrogen metabolism; (S)-allantoin degradation; (S)-ureidoglycolate from allantoate (aminidohydrolase route): step 1/1. This chain is Probable allantoicase, found in Photobacterium profundum (strain SS9).